Consider the following 357-residue polypeptide: MKNYKIVLLSGDGIGPEISEVSKKVLKKLSRKHNFNIEIIEKLFGGIAYEKYGTPAPDETLDQCKKCDAVLLACVGDIKYDSLARELRPESGLLKLRSALGLFANIRPVKIRKSLVNTSTLKKEIVENVDLIVVRELIGGIYFGKPRGHITNTKIPKAFNTMVYDSAEIERITEIAIKIANQRNKKICSVDKSNVLEVSQLWRDTVLNITLKDKNISLSNMYVDNAAMQLVRDPSQFDVILTSNLFGDILSDLAAMLTGSIGMLPSASLNNNGPGVFEPVHGSAPDIAGKNIANPIAMLLSASMMLKIGLNEEEAAKNLETAVDKVLAEGFRTADLADGSSEVLSCSEIGDKIIDEI.

Substrate is bound by residues R97, R107, R135, and D224. Mg(2+) is bound by residues D224, D248, and D252. NAD(+) is bound at residue 282-294; that stretch reads GSAPDIAGKNIAN.

This sequence belongs to the isocitrate and isopropylmalate dehydrogenases family. LeuB type 1 subfamily. Homodimer. Mg(2+) serves as cofactor. Requires Mn(2+) as cofactor.

The protein localises to the cytoplasm. It carries out the reaction (2R,3S)-3-isopropylmalate + NAD(+) = 4-methyl-2-oxopentanoate + CO2 + NADH. The protein operates within amino-acid biosynthesis; L-leucine biosynthesis; L-leucine from 3-methyl-2-oxobutanoate: step 3/4. Functionally, catalyzes the oxidation of 3-carboxy-2-hydroxy-4-methylpentanoate (3-isopropylmalate) to 3-carboxy-4-methyl-2-oxopentanoate. The product decarboxylates to 4-methyl-2 oxopentanoate. The protein is 3-isopropylmalate dehydrogenase of Prochlorococcus marinus (strain MIT 9312).